Consider the following 256-residue polypeptide: Exosome complex component RRP41-like (256 aa).

It belongs to the RNase PH family. As to quaternary structure, probable component of the RNA exosome complex. Highly expressed in imbibed seeds and young seedlings.

It localises to the cytoplasm. The protein localises to the nucleus. In terms of biological role, non-catalytic component of the RNA exosome complex which has 3'-&gt;5' exoribonuclease activity and participates in a multitude of cellular RNA processing, maturation and degradation events. In vitro, is a processive phosphorolytic exonuclease and requires a single-stranded poly(A) tail on the substrate RNA for its activity. Plays an important role in seed germination and early seedling growth by mediating specific cytoplasmic mRNA decay of transcripts coding for the abscisic acid (ABA) biosynthetic enzymes NCED5 and NCED6, and the ABA signaling transcription factors ABI3 and ABI4. This chain is Exosome complex component RRP41-like, found in Arabidopsis thaliana (Mouse-ear cress).